Reading from the N-terminus, the 324-residue chain is Endochitinase B (324 aa).

An N-terminal signal peptide occupies residues Met-1–Ala-23. Residues Glu-24–Gly-65 enclose the Chitin-binding type-1 domain. Cystine bridges form between Cys-26/Cys-41, Cys-35/Cys-47, Cys-40/Cys-54, and Cys-59/Cys-63. Residues Pro-67 and Pro-69 each carry the 4-hydroxyproline modification. 3 disulfide bridges follow: Cys-96–Cys-158, Cys-170–Cys-178, and Cys-277–Cys-309. Residue Glu-140 is the Proton donor of the active site. The propeptide at Gly-318–Met-324 is removed in mature form.

It belongs to the glycosyl hydrolase 19 family. Chitinase class I subfamily. Post-translationally, the 4-hydroxyproline residues are not glycosylated in this plant vacuolar protein.

The protein resides in the vacuole. It catalyses the reaction Random endo-hydrolysis of N-acetyl-beta-D-glucosaminide (1-&gt;4)-beta-linkages in chitin and chitodextrins.. Its function is as follows. Defense against chitin-containing fungal pathogens. The protein is Endochitinase B (CHN50) of Nicotiana tabacum (Common tobacco).